The primary structure comprises 445 residues: N-succinylarginine dihydrolase (445 aa).

Residues 19 to 28 (AGLSYGNVAS), Asn110, and 137 to 138 (HR) each bind substrate. Glu174 is an active-site residue. Arg214 serves as a coordination point for substrate. The active site involves His250. Asp252 and Asn363 together coordinate substrate. Catalysis depends on Cys369, which acts as the Nucleophile.

Belongs to the succinylarginine dihydrolase family. Homodimer.

It carries out the reaction N(2)-succinyl-L-arginine + 2 H2O + 2 H(+) = N(2)-succinyl-L-ornithine + 2 NH4(+) + CO2. It participates in amino-acid degradation; L-arginine degradation via AST pathway; L-glutamate and succinate from L-arginine: step 2/5. Catalyzes the hydrolysis of N(2)-succinylarginine into N(2)-succinylornithine, ammonia and CO(2). The protein is N-succinylarginine dihydrolase of Aeromonas hydrophila subsp. hydrophila (strain ATCC 7966 / DSM 30187 / BCRC 13018 / CCUG 14551 / JCM 1027 / KCTC 2358 / NCIMB 9240 / NCTC 8049).